The following is a 286-amino-acid chain: MSSERKAPHAAIGQVLIEALPYIRQFEGKTFVIKYGGAAMKDDTLKNMFAQNVTLLRKVGIRIVLVHGGGDAITRTAEKLGLQSRFVQGRRVTDKEMISVIQMTLAGKVNQDIVQLISEHGGKAVGVSGLDADTIKAHPHPNAEQLGLVGEVEQINTDYIDLLSQAGLIPVIAPVGFDCDGNLYNINADDAASSISIALKAEKLIYVSDVAGIQVGDKILKTISKAEAADLIERGIISGGMIPKVVSAFNTMDGGVGKVHLIDGKSTHSLLLEIFTHEGVGTQFIN.

Residues 69–70 (GG), Arg91, and Asn185 each bind substrate.

Belongs to the acetylglutamate kinase family. ArgB subfamily.

The protein localises to the cytoplasm. The enzyme catalyses N-acetyl-L-glutamate + ATP = N-acetyl-L-glutamyl 5-phosphate + ADP. It participates in amino-acid biosynthesis; L-arginine biosynthesis; N(2)-acetyl-L-ornithine from L-glutamate: step 2/4. Functionally, catalyzes the ATP-dependent phosphorylation of N-acetyl-L-glutamate. This is Acetylglutamate kinase from Chlorobium chlorochromatii (strain CaD3).